A 1070-amino-acid chain; its full sequence is DNA-directed RNA polymerase subunit beta (1070 aa).

This sequence belongs to the RNA polymerase beta chain family. In terms of assembly, in plastids the minimal PEP RNA polymerase catalytic core is composed of four subunits: alpha, beta, beta', and beta''. When a (nuclear-encoded) sigma factor is associated with the core the holoenzyme is formed, which can initiate transcription.

The protein resides in the plastid. The protein localises to the chloroplast. It carries out the reaction RNA(n) + a ribonucleoside 5'-triphosphate = RNA(n+1) + diphosphate. Functionally, DNA-dependent RNA polymerase catalyzes the transcription of DNA into RNA using the four ribonucleoside triphosphates as substrates. The protein is DNA-directed RNA polymerase subunit beta of Morus indica (Mulberry).